The chain runs to 405 residues: Threonine synthase (405 aa).

Lysine 106 carries the post-translational modification N6-(pyridoxal phosphate)lysine. Residues asparagine 132, 233-237 (GNAGN), and threonine 371 contribute to the pyridoxal 5'-phosphate site.

The protein belongs to the threonine synthase family. Requires pyridoxal 5'-phosphate as cofactor.

It catalyses the reaction O-phospho-L-homoserine + H2O = L-threonine + phosphate. Its pathway is amino-acid biosynthesis; L-threonine biosynthesis; L-threonine from L-aspartate: step 5/5. Functionally, catalyzes the gamma-elimination of phosphate from L-phosphohomoserine and the beta-addition of water to produce L-threonine. The protein is Threonine synthase (thrC) of Methanocaldococcus jannaschii (strain ATCC 43067 / DSM 2661 / JAL-1 / JCM 10045 / NBRC 100440) (Methanococcus jannaschii).